Here is a 340-residue protein sequence, read N- to C-terminus: Central glycolytic genes regulator (340 aa).

Positions 37–56 (RRSLSASLGISERVLRGEVQ) form a DNA-binding region, H-T-H motif. Beta-D-fructose 1,6-bisphosphate contacts are provided by residues 149–152 (GGTT), Arg-175, Gln-185, 250–251 (RR), Glu-269, and Lys-310.

Belongs to the SorC transcriptional regulatory family. As to quaternary structure, homotetramer. Binds primarily as a dimer to each half-site of the full-length operator, with much higher affinity for the right site. Then, both dimers interact, bridging the two-half sites of the operator region.

Its activity is regulated as follows. Stability and function are regulated by the effector molecule fructose-1,6-bisphosphate (FBP). In the presence of glucose, binding of FBP to the low-affinity sugar-binding site of CggR disrupts dimer/dimer bridging interactions and triggers a tetramer to dimer transition, which leaves two physically independent dimers on the target DNA and allows transcription of the downstream coding sequences by the RNA polymerase. In addition, FBP and several other phosphorylated compounds can bind to a high-affinity binding-site and protect CggR against aggregation and proteolysis. Functionally, in the absence of glucose, represses the transcription of the gapA operon, which encodes five key glycolytic enzymes. Binds specifically to the cggR-gapA promoter region and blocks the progression of the RNA polymerase, leading to the arrest of the transcription. This is Central glycolytic genes regulator (cggR) from Bacillus subtilis (strain 168).